We begin with the raw amino-acid sequence, 382 residues long: Caspase-1-B (382 aa).

Residues 1-98 (MTAQLNKVRK…HEHAPSPIQE (98 aa)) constitute a propeptide that is removed on maturation. Active-site residues include H216 and C270. The propeptide occupies 283-292 (DVAPAPLEDD).

It belongs to the peptidase C14A family. As to quaternary structure, heterotetramer that consists of two anti-parallel arranged heterodimers, each one formed by a 20 kDa (Caspase-1 subunit p20) and a 10 kDa (Caspase-1 subunit p10) subunit. Heterotetramer that consists of two anti-parallel arranged heterodimers, each one formed by a 20 kDa (Caspase-1 subunit p20) and a 10 kDa (Caspase-1 subunit p10) subunit. Can form a heterodimer with isoform epsilon which then has an inhibitory effect. The two subunits are derived from the precursor sequence by an autocatalytic mechanism.

Its subcellular location is the cytoplasm. The protein resides in the cell membrane. It carries out the reaction Strict requirement for an Asp residue at position P1 and has a preferred cleavage sequence of Tyr-Val-Ala-Asp-|-.. Functionally, thiol protease involved in a variety of inflammatory processes by proteolytically cleaving other proteins, such as the precursors of the inflammatory cytokines interleukin-1 beta (IL1B) and interleukin 18 (IL18) as well as the pyroptosis inducer Gasdermin-D (GSDMD), into active mature peptides. Plays a key role in cell immunity as an inflammatory response initiator: once activated through formation of an inflammasome complex, it initiates a pro-inflammatory response through the cleavage of the two inflammatory cytokines IL1B and IL18, releasing the mature cytokines which are involved in a variety of inflammatory processes. Cleaves a tetrapeptide after an Asp residue at position P1. Also initiates pyroptosis, a programmed lytic cell death pathway, through cleavage of GSDMD. The chain is Caspase-1-B (casp1-b) from Xenopus laevis (African clawed frog).